The primary structure comprises 269 residues: 2-keto-4-pentenoate hydratase (269 aa).

This sequence belongs to the hydratase/decarboxylase family. MhpD subfamily. A divalent metal cation serves as cofactor.

It carries out the reaction (S)-4-hydroxy-2-oxopentanoate = (2Z)-2-hydroxypenta-2,4-dienoate + H2O. It participates in aromatic compound metabolism; 3-phenylpropanoate degradation. Its function is as follows. Catalyzes the conversion of 2-hydroxypentadienoic acid (enolic form of 2-oxopent-4-enoate) to 4-hydroxy-2-ketopentanoic acid. The sequence is that of 2-keto-4-pentenoate hydratase from Paraburkholderia xenovorans (strain LB400).